We begin with the raw amino-acid sequence, 487 residues long: NADH-quinone oxidoreductase subunit N (487 aa).

14 helical membrane-spanning segments follow: residues 8–28, 35–55, 78–98, 104–124, 125–145, 159–179, 203–223, 235–255, 271–291, 297–317, 328–348, 376–396, 409–428, and 451–471; these read LIAM…MLSI, FINA…LYFV, GLVI…LVGY, EFYL…SANH, LASL…LIGY, YMLL…LLYA, ILAG…LVPF, PAPV…AVVM, LVLS…AISQ, LLGY…VAVQ, IGVY…VVSL, AVMT…GFIG, LWWL…YYYL, and ALTA…VLGI.

It belongs to the complex I subunit 2 family. NDH-1 is composed of 13 different subunits. Subunits NuoA, H, J, K, L, M, N constitute the membrane sector of the complex.

It localises to the cell inner membrane. It catalyses the reaction a quinone + NADH + 5 H(+)(in) = a quinol + NAD(+) + 4 H(+)(out). Functionally, NDH-1 shuttles electrons from NADH, via FMN and iron-sulfur (Fe-S) centers, to quinones in the respiratory chain. The immediate electron acceptor for the enzyme in this species is believed to be ubiquinone. Couples the redox reaction to proton translocation (for every two electrons transferred, four hydrogen ions are translocated across the cytoplasmic membrane), and thus conserves the redox energy in a proton gradient. This is NADH-quinone oxidoreductase subunit N from Yersinia pseudotuberculosis serotype O:1b (strain IP 31758).